A 319-amino-acid chain; its full sequence is Formimidoylglutamase (319 aa).

Residues His131, Asp154, His156, Asp158, Cys248, and Asp250 each contribute to the Mn(2+) site.

The protein belongs to the arginase family. Mn(2+) serves as cofactor.

The catalysed reaction is N-formimidoyl-L-glutamate + H2O = formamide + L-glutamate. The protein operates within amino-acid degradation; L-histidine degradation into L-glutamate; L-glutamate from N-formimidoyl-L-glutamate (hydrolase route): step 1/1. Catalyzes the conversion of N-formimidoyl-L-glutamate to L-glutamate and formamide. This Legionella pneumophila (strain Lens) protein is Formimidoylglutamase.